We begin with the raw amino-acid sequence, 32 residues long: Zinc metalloproteinase/disintegrin-like CdtV1 (32 aa).

Intrachain disulfides connect Cys5/Cys14 and Cys7/Cys15.

The protein belongs to the venom metalloproteinase (M12B) family. P-II subfamily. P-IIa sub-subfamily. Monomer. In terms of tissue distribution, expressed by the venom gland.

It is found in the secreted. Its function is as follows. Snake venom metalloproteinase that impairs hemostasis in the envenomed animal. This Crotalus durissus terrificus (South American rattlesnake) protein is Zinc metalloproteinase/disintegrin-like CdtV1.